Reading from the N-terminus, the 396-residue chain is Elongation factor Tu (396 aa).

The region spanning 10 to 206 (KPHVNIGTIG…AVDESVPDPV (197 aa)) is the tr-type G domain. Residues 19-26 (GHVDHGKT) form a G1 region. 19–26 (GHVDHGKT) contributes to the GTP binding site. Thr-26 lines the Mg(2+) pocket. The segment at 62-66 (GITIN) is G2. Residues 83–86 (DAPG) form a G3 region. GTP-binding positions include 83–87 (DAPGH) and 138–141 (NKSD). The interval 138–141 (NKSD) is G4. The G5 stretch occupies residues 176-178 (SGL).

The protein belongs to the TRAFAC class translation factor GTPase superfamily. Classic translation factor GTPase family. EF-Tu/EF-1A subfamily. In terms of assembly, monomer.

It is found in the cytoplasm. The enzyme catalyses GTP + H2O = GDP + phosphate + H(+). Functionally, GTP hydrolase that promotes the GTP-dependent binding of aminoacyl-tRNA to the A-site of ribosomes during protein biosynthesis. The polypeptide is Elongation factor Tu (Pseudarthrobacter chlorophenolicus (strain ATCC 700700 / DSM 12829 / CIP 107037 / JCM 12360 / KCTC 9906 / NCIMB 13794 / A6) (Arthrobacter chlorophenolicus)).